The primary structure comprises 158 residues: Transcription elongation factor GreA (158 aa).

Positions 10–76 form a coiled coil; it reads TLEGKKKLEE…QIEKMIRNAE (67 aa).

Belongs to the GreA/GreB family.

In terms of biological role, necessary for efficient RNA polymerase transcription elongation past template-encoded arresting sites. The arresting sites in DNA have the property of trapping a certain fraction of elongating RNA polymerases that pass through, resulting in locked ternary complexes. Cleavage of the nascent transcript by cleavage factors such as GreA or GreB allows the resumption of elongation from the new 3'terminus. GreA releases sequences of 2 to 3 nucleotides. This is Transcription elongation factor GreA from Halalkalibacterium halodurans (strain ATCC BAA-125 / DSM 18197 / FERM 7344 / JCM 9153 / C-125) (Bacillus halodurans).